A 295-amino-acid chain; its full sequence is 4-hydroxy-tetrahydrodipicolinate synthase (295 aa).

Residue threonine 46 coordinates pyruvate. The active-site Proton donor/acceptor is tyrosine 135. Lysine 164 serves as the catalytic Schiff-base intermediate with substrate. Residue isoleucine 205 participates in pyruvate binding.

Belongs to the DapA family. As to quaternary structure, homotetramer; dimer of dimers.

It localises to the cytoplasm. The enzyme catalyses L-aspartate 4-semialdehyde + pyruvate = (2S,4S)-4-hydroxy-2,3,4,5-tetrahydrodipicolinate + H2O + H(+). The protein operates within amino-acid biosynthesis; L-lysine biosynthesis via DAP pathway; (S)-tetrahydrodipicolinate from L-aspartate: step 3/4. Functionally, catalyzes the condensation of (S)-aspartate-beta-semialdehyde [(S)-ASA] and pyruvate to 4-hydroxy-tetrahydrodipicolinate (HTPA). The protein is 4-hydroxy-tetrahydrodipicolinate synthase of Wolinella succinogenes (strain ATCC 29543 / DSM 1740 / CCUG 13145 / JCM 31913 / LMG 7466 / NCTC 11488 / FDC 602W) (Vibrio succinogenes).